A 427-amino-acid polypeptide reads, in one-letter code: Septin-6 (427 aa).

At Ala2 the chain carries N-acetylalanine. A Phosphoserine modification is found at Ser27. A Septin-type G domain is found at 39–305; the sequence is QGFCFNILCV…ELYRRCKLEE (267 aa). The tract at residues 49-56 is G1 motif; that stretch reads GETGLGKS. GTP-binding positions include 49-56, Gly104, 185-193, Gly239, and Arg254; these read GETGLGKS and KSDAISKSE. The segment at 101–104 is G3 motif; sequence STVG. Residues 184–187 are G4 motif; sequence AKSD. A coiled-coil region spans residues 321–416; it reads QETYEAKRNE…QSQGSQAGGS (96 aa). An N6-acetyllysine modification is found at Lys367. Residues 405-427 form a disordered region; it reads LLQSQGSQAGGSQTLKRDKEKKN. The segment covering 407–417 has biased composition (low complexity); the sequence is QSQGSQAGGSQ. Position 416 is a phosphoserine (Ser416). At Thr418 the chain carries Phosphothreonine.

This sequence belongs to the TRAFAC class TrmE-Era-EngA-EngB-Septin-like GTPase superfamily. Septin GTPase family. Septins polymerize into heterooligomeric protein complexes that form filaments, and associate with cellular membranes, actin filaments and microtubules. GTPase activity is required for filament formation. Filaments are assembled from asymmetrical heterotrimers, composed of SEPTIN2, SEPTIN6 and SEPTIN7 that associate head-to-head to form a hexameric unit. Within the trimer, directly interacts with SEPTIN2 and SEPTIN7. Also interacts with SEPTIN9 and SEPTIN12. Interaction with SEPTIN12 alters filament structure. Component of a septin core octameric complex consisting of SEPTIN12, SEPTIN7, SEPTIN6 and SEPTIN2 or SEPTIN4 in the order 12-7-6-2-2-6-7-12 or 12-7-6-4-4-6-7-12 and located in the sperm annulus. Interacts with SOCS7. Interacts with HNRNPA1.

The protein localises to the cytoplasm. Its subcellular location is the cytoskeleton. The protein resides in the spindle. It is found in the chromosome. It localises to the centromere. The protein localises to the kinetochore. Its subcellular location is the cleavage furrow. The protein resides in the midbody. It is found in the cell projection. It localises to the cilium. The protein localises to the flagellum. In terms of biological role, filament-forming cytoskeletal GTPase. Required for normal organization of the actin cytoskeleton. Involved in cytokinesis. Forms a filamentous structure with SEPTIN12, SEPTIN6, SEPTIN2 and probably SEPTIN4 at the sperm annulus which is required for the structural integrity and motility of the sperm tail during postmeiotic differentiation. The protein is Septin-6 of Bos taurus (Bovine).